Reading from the N-terminus, the 444-residue chain is Probable glycine dehydrogenase (decarboxylating) subunit 1 (444 aa).

This sequence belongs to the GcvP family. N-terminal subunit subfamily. The glycine cleavage system is composed of four proteins: P, T, L and H. In this organism, the P 'protein' is a heterodimer of two subunits.

The catalysed reaction is N(6)-[(R)-lipoyl]-L-lysyl-[glycine-cleavage complex H protein] + glycine + H(+) = N(6)-[(R)-S(8)-aminomethyldihydrolipoyl]-L-lysyl-[glycine-cleavage complex H protein] + CO2. Its function is as follows. The glycine cleavage system catalyzes the degradation of glycine. The P protein binds the alpha-amino group of glycine through its pyridoxal phosphate cofactor; CO(2) is released and the remaining methylamine moiety is then transferred to the lipoamide cofactor of the H protein. In Chlorobium phaeobacteroides (strain DSM 266 / SMG 266 / 2430), this protein is Probable glycine dehydrogenase (decarboxylating) subunit 1.